We begin with the raw amino-acid sequence, 319 residues long: Acetyl esterase (319 aa).

The short motif at 91–93 is the Involved in the stabilization of the negatively charged intermediate by the formation of the oxyanion hole element; it reads HGG. Residues Ser-165, Asp-262, and His-292 contribute to the active site.

Belongs to the 'GDXG' lipolytic enzyme family. In terms of assembly, homodimer. Interacts with MalT and MelA.

It localises to the cytoplasm. Its function is as follows. Displays esterase activity towards short chain fatty esters (acyl chain length of up to 8 carbons). Able to hydrolyze triacetylglycerol (triacetin) and tributyrylglycerol (tributyrin), but not trioleylglycerol (triolein) or cholesterol oleate. Negatively regulates MalT activity by antagonizing maltotriose binding. Inhibits MelA galactosidase activity. The sequence is that of Acetyl esterase from Shigella boydii serotype 4 (strain Sb227).